Consider the following 397-residue polypeptide: Arginine biosynthesis bifunctional protein ArgJ (397 aa).

6 residues coordinate substrate: Thr-147, Lys-173, Thr-184, Glu-270, Asn-392, and Thr-397. The active-site Nucleophile is the Thr-184.

This sequence belongs to the ArgJ family. In terms of assembly, heterotetramer of two alpha and two beta chains.

The protein resides in the cytoplasm. It catalyses the reaction N(2)-acetyl-L-ornithine + L-glutamate = N-acetyl-L-glutamate + L-ornithine. The catalysed reaction is L-glutamate + acetyl-CoA = N-acetyl-L-glutamate + CoA + H(+). It participates in amino-acid biosynthesis; L-arginine biosynthesis; L-ornithine and N-acetyl-L-glutamate from L-glutamate and N(2)-acetyl-L-ornithine (cyclic): step 1/1. It functions in the pathway amino-acid biosynthesis; L-arginine biosynthesis; N(2)-acetyl-L-ornithine from L-glutamate: step 1/4. Its function is as follows. Catalyzes two activities which are involved in the cyclic version of arginine biosynthesis: the synthesis of N-acetylglutamate from glutamate and acetyl-CoA as the acetyl donor, and of ornithine by transacetylation between N(2)-acetylornithine and glutamate. This Staphylococcus epidermidis (strain ATCC 35984 / DSM 28319 / BCRC 17069 / CCUG 31568 / BM 3577 / RP62A) protein is Arginine biosynthesis bifunctional protein ArgJ.